The chain runs to 277 residues: Large ribosomal subunit protein uL2 (277 aa).

Residues 215 to 277 (GIRPTVRGSV…KLIVKRRNDK (63 aa)) are disordered. A compositionally biased stretch (basic and acidic residues) spans 264–277 (KYSDKLIVKRRNDK).

It belongs to the universal ribosomal protein uL2 family. As to quaternary structure, part of the 50S ribosomal subunit. Forms a bridge to the 30S subunit in the 70S ribosome.

In terms of biological role, one of the primary rRNA binding proteins. Required for association of the 30S and 50S subunits to form the 70S ribosome, for tRNA binding and peptide bond formation. It has been suggested to have peptidyltransferase activity; this is somewhat controversial. Makes several contacts with the 16S rRNA in the 70S ribosome. This is Large ribosomal subunit protein uL2 from Clostridium acetobutylicum (strain ATCC 824 / DSM 792 / JCM 1419 / IAM 19013 / LMG 5710 / NBRC 13948 / NRRL B-527 / VKM B-1787 / 2291 / W).